A 310-amino-acid polypeptide reads, in one-letter code: 3,5-dioxohexanoate:acetyl-CoA acetone transferase (310 aa).

Residues H49, H51, and E258 each coordinate Zn(2+).

Belongs to the BKACE family. Zn(2+) is required as a cofactor.

It carries out the reaction 3,5-dioxohexanoate + acetyl-CoA = acetoacetyl-CoA + acetoacetate. In terms of biological role, catalyzes the condensation of 3,5-dioxohexanoate and acetyl-CoA, forming acetoacetate and acetoacetyl-CoA. May be involved in fatty acid biosynthesis rescue via triacetic acid lactone. The sequence is that of 3,5-dioxohexanoate:acetyl-CoA acetone transferase from Paraburkholderia graminis (strain ATCC 700544 / DSM 17151 / LMG 18924 / NCIMB 13744 / C4D1M).